A 305-amino-acid polypeptide reads, in one-letter code: Acetyl-coenzyme A carboxylase carboxyl transferase subunit beta (305 aa).

In terms of domain architecture, CoA carboxyltransferase N-terminal spans 23 to 292; it reads GWLKCTHCNE…EENEPSPPPK (270 aa). Positions 27, 30, 46, and 49 each coordinate Zn(2+). The C4-type zinc finger occupies 27-49; sequence CTHCNELIHANELEQNSNCCPKC. A disordered region spans residues 281–305; it reads FSEENEPSPPPKNLIKKTSPLKDKN.

This sequence belongs to the AccD/PCCB family. As to quaternary structure, acetyl-CoA carboxylase is a heterohexamer composed of biotin carboxyl carrier protein (AccB), biotin carboxylase (AccC) and two subunits each of ACCase subunit alpha (AccA) and ACCase subunit beta (AccD). The cofactor is Zn(2+).

It is found in the cytoplasm. It catalyses the reaction N(6)-carboxybiotinyl-L-lysyl-[protein] + acetyl-CoA = N(6)-biotinyl-L-lysyl-[protein] + malonyl-CoA. Its pathway is lipid metabolism; malonyl-CoA biosynthesis; malonyl-CoA from acetyl-CoA: step 1/1. Functionally, component of the acetyl coenzyme A carboxylase (ACC) complex. Biotin carboxylase (BC) catalyzes the carboxylation of biotin on its carrier protein (BCCP) and then the CO(2) group is transferred by the transcarboxylase to acetyl-CoA to form malonyl-CoA. In Protochlamydia amoebophila (strain UWE25), this protein is Acetyl-coenzyme A carboxylase carboxyl transferase subunit beta.